The sequence spans 364 residues: UDP-N-acetylglucosamine--N-acetylmuramyl-(pentapeptide) pyrophosphoryl-undecaprenol N-acetylglucosamine transferase (364 aa).

Residues 14 to 16 (TGG), Asn126, Arg163, Ser190, Ile246, 265 to 270 (ALTVSE), and Gln291 each bind UDP-N-acetyl-alpha-D-glucosamine.

The protein belongs to the glycosyltransferase 28 family. MurG subfamily.

The protein resides in the cell inner membrane. The catalysed reaction is di-trans,octa-cis-undecaprenyl diphospho-N-acetyl-alpha-D-muramoyl-L-alanyl-D-glutamyl-meso-2,6-diaminopimeloyl-D-alanyl-D-alanine + UDP-N-acetyl-alpha-D-glucosamine = di-trans,octa-cis-undecaprenyl diphospho-[N-acetyl-alpha-D-glucosaminyl-(1-&gt;4)]-N-acetyl-alpha-D-muramoyl-L-alanyl-D-glutamyl-meso-2,6-diaminopimeloyl-D-alanyl-D-alanine + UDP + H(+). It functions in the pathway cell wall biogenesis; peptidoglycan biosynthesis. Cell wall formation. Catalyzes the transfer of a GlcNAc subunit on undecaprenyl-pyrophosphoryl-MurNAc-pentapeptide (lipid intermediate I) to form undecaprenyl-pyrophosphoryl-MurNAc-(pentapeptide)GlcNAc (lipid intermediate II). The chain is UDP-N-acetylglucosamine--N-acetylmuramyl-(pentapeptide) pyrophosphoryl-undecaprenol N-acetylglucosamine transferase from Shewanella loihica (strain ATCC BAA-1088 / PV-4).